The sequence spans 1148 residues: Trafficking protein particle complex subunit 9 (1148 aa).

S566 and S953 each carry phosphoserine.

This sequence belongs to the NIBP family. In terms of assembly, component of the multisubunit TRAPP (transport protein particle) complex, which includes at least TRAPPC2, TRAPPC2L, TRAPPC3, TRAPPC3L, TRAPPC4, TRAPPC5, TRAPPC8, TRAPPC9, TRAPPC10, TRAPPC11 and TRAPPC12. Directly interacts with IKBKB and MAP3K14. As to expression, expressed at high levels in muscle and kidney and to a lower extent in brain, heart and placenta.

Its subcellular location is the golgi apparatus. It is found in the cis-Golgi network. The protein localises to the endoplasmic reticulum. The protein resides in the cytoplasm. In terms of biological role, functions as an activator of NF-kappa-B through increased phosphorylation of the IKK complex. May function in neuronal cells differentiation. May play a role in vesicular transport from endoplasmic reticulum to Golgi. The protein is Trafficking protein particle complex subunit 9 (TRAPPC9) of Homo sapiens (Human).